The primary structure comprises 94 residues: Large ribosomal subunit protein bL27 (94 aa).

Positions 1–9 (MTLNNLQLF) are excised as a propeptide. The tract at residues 9 to 33 (FAHKKGGGSTSNGRDSQAKRLGAKA) is disordered.

It belongs to the bacterial ribosomal protein bL27 family. In terms of processing, the N-terminus is cleaved by ribosomal processing cysteine protease Prp.

The polypeptide is Large ribosomal subunit protein bL27 (Streptococcus pneumoniae serotype 4 (strain ATCC BAA-334 / TIGR4)).